The primary structure comprises 93 residues: MPKSKVRKKNDFTVKPVSRTPVKVKVGPSSVWFVALFIGLMLIGLVWLMVFQLAAVGSQAPAALNWMAQLGPWNYAIAFAFMITGLLLTMRWH.

2 consecutive transmembrane segments (helical) span residues 31-51 (VWFV…LMVF) and 70-90 (LGPW…LLTM).

The protein belongs to the CrgA family.

It is found in the cell membrane. In terms of biological role, involved in cell division. In Mycobacterium marinum (strain ATCC BAA-535 / M), this protein is Cell division protein CrgA.